The following is a 400-amino-acid chain: Acetate kinase (400 aa).

Mg(2+) is bound at residue asparagine 10. ATP is bound at residue lysine 17. Substrate is bound at residue arginine 91. Aspartate 150 serves as the catalytic Proton donor/acceptor. Residues histidine 210–glycine 214, aspartate 285–arginine 287, and glycine 333–asparagine 337 contribute to the ATP site. Glutamate 387 provides a ligand contact to Mg(2+).

This sequence belongs to the acetokinase family. In terms of assembly, homodimer. The cofactor is Mg(2+). Mn(2+) serves as cofactor.

It is found in the cytoplasm. The catalysed reaction is acetate + ATP = acetyl phosphate + ADP. Its pathway is metabolic intermediate biosynthesis; acetyl-CoA biosynthesis; acetyl-CoA from acetate: step 1/2. Functionally, catalyzes the formation of acetyl phosphate from acetate and ATP. Can also catalyze the reverse reaction. In Baumannia cicadellinicola subsp. Homalodisca coagulata, this protein is Acetate kinase.